A 222-amino-acid polypeptide reads, in one-letter code: 7-cyano-7-deazaguanine synthase (222 aa).

Residue 9–19 (ISGGMDSALSA) participates in ATP binding. The Zn(2+) site is built by Cys-188, Cys-196, Cys-199, and Cys-202.

The protein belongs to the QueC family. Requires Zn(2+) as cofactor.

It catalyses the reaction 7-carboxy-7-deazaguanine + NH4(+) + ATP = 7-cyano-7-deazaguanine + ADP + phosphate + H2O + H(+). It functions in the pathway purine metabolism; 7-cyano-7-deazaguanine biosynthesis. Its function is as follows. Catalyzes the ATP-dependent conversion of 7-carboxy-7-deazaguanine (CDG) to 7-cyano-7-deazaguanine (preQ(0)). The sequence is that of 7-cyano-7-deazaguanine synthase from Sulfurovum sp. (strain NBC37-1).